Here is a 178-residue protein sequence, read N- to C-terminus: 2-C-methyl-D-erythritol 2,4-cyclodiphosphate synthase (178 aa).

A divalent metal cation is bound by residues D24, H26, and H61. 24-26 lines the 4-CDP-2-C-methyl-D-erythritol 2-phosphate pocket; the sequence is DSH. A 4-CDP-2-C-methyl-D-erythritol 2-phosphate-binding site is contributed by 150 to 153; the sequence is TSGE.

Belongs to the IspF family. Homotrimer. The cofactor is a divalent metal cation.

The catalysed reaction is 4-CDP-2-C-methyl-D-erythritol 2-phosphate = 2-C-methyl-D-erythritol 2,4-cyclic diphosphate + CMP. It participates in isoprenoid biosynthesis; isopentenyl diphosphate biosynthesis via DXP pathway; isopentenyl diphosphate from 1-deoxy-D-xylulose 5-phosphate: step 4/6. Involved in the biosynthesis of isopentenyl diphosphate (IPP) and dimethylallyl diphosphate (DMAPP), two major building blocks of isoprenoid compounds. Catalyzes the conversion of 4-diphosphocytidyl-2-C-methyl-D-erythritol 2-phosphate (CDP-ME2P) to 2-C-methyl-D-erythritol 2,4-cyclodiphosphate (ME-CPP) with a corresponding release of cytidine 5-monophosphate (CMP). In Chlamydia muridarum (strain MoPn / Nigg), this protein is 2-C-methyl-D-erythritol 2,4-cyclodiphosphate synthase.